The chain runs to 141 residues: Nucleoside diphosphate kinase (141 aa).

ATP is bound by residues K11, F59, R87, T93, R104, and N114. H117 (pros-phosphohistidine intermediate) is an active-site residue.

It belongs to the NDK family. In terms of assembly, homotetramer. The cofactor is Mg(2+).

The protein localises to the cytoplasm. It catalyses the reaction a 2'-deoxyribonucleoside 5'-diphosphate + ATP = a 2'-deoxyribonucleoside 5'-triphosphate + ADP. It carries out the reaction a ribonucleoside 5'-diphosphate + ATP = a ribonucleoside 5'-triphosphate + ADP. Major role in the synthesis of nucleoside triphosphates other than ATP. The ATP gamma phosphate is transferred to the NDP beta phosphate via a ping-pong mechanism, using a phosphorylated active-site intermediate. In Xylella fastidiosa (strain M23), this protein is Nucleoside diphosphate kinase.